The sequence spans 479 residues: Phosphatidylinositol 4-kinase type 2-alpha (479 aa).

M1 carries the N-acetylmethionine modification. Residues 1-58 (MDETSPLVSPERAQPPEYTFPSGSGAHFPQVPGGAVRVAAAAGSGPSPPCSPGHDRER) form a disordered region. S5, S9, S44, S47, and S51 each carry phosphoserine. Residues 31–45 (VPGGAVRVAAAAGSG) are compositionally biased toward low complexity. Residues 124 to 453 (SIYPERIYQG…VQMPPVIVET (330 aa)) form the PI3K/PI4K catalytic domain. Positions 130–136 (IYQGSSG) are G-loop. ATP-binding positions include 131–137 (YQGSSGS) and K152. An important for substrate binding region spans residues 157–159 (EPY). The interval 165–178 (KWTKWLQKLCCPCC) is important for interaction with membranes. Residues C174, C175, C177, and C178 are each lipidated (S-palmitoyl cysteine). 261-264 (QLFV) is a binding site for ATP. An important for interaction with membranes region spans residues 268–276 (KDADYWLRR). Residues 305–313 (RNTDRGNDN) form a catalytic loop region. The segment at 344–364 (AIDNGLAFPLKHPDSWRAYPF) is activation loop. D346 contacts ATP. An important for interaction with membranes region spans residues 359–368 (WRAYPFYWAW). S462 carries the phosphoserine modification.

Belongs to the PI3/PI4-kinase family. Type II PI4K subfamily. Associates with the BLOC-1 and the AP-3 complexes; the BLOC-1 complex is required for optimal binding of PI4K2A to the AP-3 complex. Interacts with BLOC1S5 and DTNBP1. Interacts with ITCH. Interacts with FOS; this interaction may enhance phosphatidylinositol phosphorylation activity. Interacts with ATG9A. In terms of processing, palmitoylated by ZDHHC3 and ZDHHC7 in the CCPCC motif. Palmitoylation is cholesterol-dependent, and required for TGN localization. Post-translationally, ubiquitinated by ITCH; this does not lead to proteasomal degradation. Detected in brain (at protein level).

It localises to the golgi apparatus. Its subcellular location is the trans-Golgi network membrane. The protein resides in the membrane raft. It is found in the endosome. The protein localises to the endosome membrane. It localises to the cytoplasmic vesicle. Its subcellular location is the cell projection. The protein resides in the dendrite. It is found in the presynaptic cell membrane. The protein localises to the synapse. It localises to the synaptosome. Its subcellular location is the mitochondrion. The protein resides in the membrane. It is found in the cell membrane. The protein localises to the perikaryon. It localises to the neuron projection. It catalyses the reaction a 1,2-diacyl-sn-glycero-3-phospho-(1D-myo-inositol) + ATP = a 1,2-diacyl-sn-glycero-3-phospho-(1D-myo-inositol 4-phosphate) + ADP + H(+). In terms of biological role, membrane-bound phosphatidylinositol-4 kinase (PI4-kinase) that catalyzes the phosphorylation of phosphatidylinositol (PI) to phosphatidylinositol 4-phosphate (PI4P), a lipid that plays important roles in endocytosis, Golgi function, protein sorting and membrane trafficking and is required for prolonged survival of neurons. Besides, phosphorylation of phosphatidylinositol (PI) to phosphatidylinositol 4-phosphate (PI4P) is the first committed step in the generation of phosphatidylinositol 4,5-bisphosphate (PIP2), a precursor of the second messenger inositol 1,4,5-trisphosphate (InsP3). In Mus musculus (Mouse), this protein is Phosphatidylinositol 4-kinase type 2-alpha (Pi4k2a).